The chain runs to 190 residues: Pyridoxal 5'-phosphate synthase subunit PdxT (190 aa).

Residue 46–48 (GES) coordinates L-glutamine. Cys-78 acts as the Nucleophile in catalysis. Residues Arg-108 and 137 to 138 (IR) each bind L-glutamine. Catalysis depends on charge relay system residues His-174 and Glu-176.

The protein belongs to the glutaminase PdxT/SNO family. In terms of assembly, in the presence of PdxS, forms a dodecamer of heterodimers. Only shows activity in the heterodimer.

It catalyses the reaction aldehydo-D-ribose 5-phosphate + D-glyceraldehyde 3-phosphate + L-glutamine = pyridoxal 5'-phosphate + L-glutamate + phosphate + 3 H2O + H(+). The enzyme catalyses L-glutamine + H2O = L-glutamate + NH4(+). Its pathway is cofactor biosynthesis; pyridoxal 5'-phosphate biosynthesis. Catalyzes the hydrolysis of glutamine to glutamate and ammonia as part of the biosynthesis of pyridoxal 5'-phosphate. The resulting ammonia molecule is channeled to the active site of PdxS. This is Pyridoxal 5'-phosphate synthase subunit PdxT from Herpetosiphon aurantiacus (strain ATCC 23779 / DSM 785 / 114-95).